Consider the following 173-residue polypeptide: NADH-ubiquinone oxidoreductase chain 6 (173 aa).

6 helical membrane-spanning segments follow: residues 1-21 (MIYF…AVAS), 27-47 (FAAL…VGYG), 53-73 (LVLF…SAAL), 82-102 (WGSW…LLVG), 106-126 (YGWW…MSVL), and 141-161 (GFLL…VLEI).

This sequence belongs to the complex I subunit 6 family.

Its subcellular location is the mitochondrion membrane. The catalysed reaction is a ubiquinone + NADH + 5 H(+)(in) = a ubiquinol + NAD(+) + 4 H(+)(out). Core subunit of the mitochondrial membrane respiratory chain NADH dehydrogenase (Complex I) that is believed to belong to the minimal assembly required for catalysis. Complex I functions in the transfer of electrons from NADH to the respiratory chain. The immediate electron acceptor for the enzyme is believed to be ubiquinone. The polypeptide is NADH-ubiquinone oxidoreductase chain 6 (MT-ND6) (Latimeria chalumnae (Coelacanth)).